Here is a 405-residue protein sequence, read N- to C-terminus: Glucose-1-phosphate adenylyltransferase 1 (405 aa).

Residues tyrosine 96, glycine 161, 176 to 177 (EK), and serine 194 contribute to the alpha-D-glucose 1-phosphate site.

It belongs to the bacterial/plant glucose-1-phosphate adenylyltransferase family. In terms of assembly, homotetramer.

The enzyme catalyses alpha-D-glucose 1-phosphate + ATP + H(+) = ADP-alpha-D-glucose + diphosphate. It participates in glycan biosynthesis; glycogen biosynthesis. Involved in the biosynthesis of ADP-glucose, a building block required for the elongation reactions to produce glycogen. Catalyzes the reaction between ATP and alpha-D-glucose 1-phosphate (G1P) to produce pyrophosphate and ADP-Glc. The polypeptide is Glucose-1-phosphate adenylyltransferase 1 (Vibrio vulnificus (strain CMCP6)).